We begin with the raw amino-acid sequence, 296 residues long: NADH-cytochrome b5 reductase 1 (296 aa).

The chain crosses the membrane as a helical span at residues 11 to 31; it reads LSAVLVKFAPFAVAVIAILAA. Positions 47 to 152 constitute an FAD-binding FR-type domain; it reads SEFQNFVLKE…RGPKGAMVYT (106 aa). Residues 132–147 and 158–195 each bind FAD; these read TTLK…GPKG and HIGM…KIDL.

It belongs to the flavoprotein pyridine nucleotide cytochrome reductase family. In terms of assembly, monomer. Component of the 2-(3-amino-3-carboxypropyl)histidine synthase complex composed of dph1, dph2, dph3 and a NADH-dependent reductase, predominantly cbr1. The cofactor is FAD.

The protein resides in the mitochondrion outer membrane. It carries out the reaction 2 Fe(III)-[cytochrome b5] + NADH = 2 Fe(II)-[cytochrome b5] + NAD(+) + H(+). The enzyme catalyses 2 Fe(3+)-[Dph3] + NADH = 2 Fe(2+)-[Dph3] + NAD(+) + H(+). It participates in protein modification; peptidyl-diphthamide biosynthesis. In terms of biological role, NADH-dependent reductase for dph3 and cytochrome b5. Required for the first step of diphthamide biosynthesis, a post-translational modification of histidine which occurs in elongation factor 2. Dph1 and dph2 transfer a 3-amino-3-carboxypropyl (ACP) group from S-adenosyl-L-methionine (SAM) to a histidine residue, the reaction is assisted by a reduction system comprising dph3 and a NADH-dependent reductase, predominantly cbr1. By reducing dph3, also involved in the formation of the tRNA wobble base modification mcm5s 2U (5-methoxycarbonylmethyl-2-thiouridine), mediated by the elongator complex. The cytochrome b5/NADH cytochrome b5 reductase electron transfer system supports the catalytic activity of several sterol biosynthetic enzymes. The sequence is that of NADH-cytochrome b5 reductase 1 (cbr1) from Aspergillus terreus (strain NIH 2624 / FGSC A1156).